The primary structure comprises 413 residues: Pyruvate dehydrogenase complex subunit homolog DDB_G0271564, mitochondrial (413 aa).

A mitochondrion-targeting transit peptide spans 1-19 (MNRILKQVSNTKGKGIRFY). The 39-residue stretch at 29-67 (YMFPSVRRLLVEYGINSSKEVTATGPQNRLLKGDVLAYI) folds into the Peripheral subunit-binding (PSBD) domain.

This sequence belongs to the 2-oxoacid dehydrogenase family.

The protein resides in the mitochondrion. The pyruvate dehydrogenase complex catalyzes the overall conversion of pyruvate to acetyl-CoA and CO(2). It contains multiple copies of three enzymatic components: pyruvate dehydrogenase (E1), dihydrolipoamide acetyltransferase (E2) and lipoamide dehydrogenase (E3). The sequence is that of Pyruvate dehydrogenase complex subunit homolog DDB_G0271564, mitochondrial (pdhX) from Dictyostelium discoideum (Social amoeba).